The chain runs to 165 residues: Cyclic pyranopterin monophosphate synthase (165 aa).

Residues 76–78 (LCH) and 119–120 (ME) contribute to the substrate site. Residue D134 is part of the active site.

This sequence belongs to the MoaC family. As to quaternary structure, homohexamer; trimer of dimers.

It catalyses the reaction (8S)-3',8-cyclo-7,8-dihydroguanosine 5'-triphosphate = cyclic pyranopterin phosphate + diphosphate. Its pathway is cofactor biosynthesis; molybdopterin biosynthesis. In terms of biological role, catalyzes the conversion of (8S)-3',8-cyclo-7,8-dihydroguanosine 5'-triphosphate to cyclic pyranopterin monophosphate (cPMP). This chain is Cyclic pyranopterin monophosphate synthase, found in Photobacterium profundum (strain SS9).